We begin with the raw amino-acid sequence, 279 residues long: MVSFRFPFSFSQPPRATTSFSGFSISAVAVSVTVGAAAAGAAIAASRNPSHPILEWAFSSHRSSLSPWGSITLADESVVEPKTGFSFPASIGDSRRLLGVGLRKKSLLGLKNIDVYAFGVYADCDDVKKLVGDKYANLPASEIRGNKSFMDDLMEADIKMTIRLQIVYGKLNIRSVRNAFQESVGNRLKKFGGSDNDELLQSFTSLFKDEYKIPRNSTIDLTKDPGHVLSVAIEGNHVGSVKSHLLCRSILDLYIGEEPFDKNAREDFLDNAASLAFDN.

Residues R103, Y116, and S183 each coordinate dodecanoate.

This sequence belongs to the chalcone isomerase family. Expressed in developing cotyledons, young seedlings, roots, seeds, embryos, macrospores, preanthesis and tapetum. Restricted to developing and reproductive tissues.

It localises to the plastid. It is found in the chloroplast stroma. Its function is as follows. Fatty-acid-binding protein. Interacts preferentially with saturated fatty acid. May be involved in alpha-linolenic (C18:3) metabolism. This is Fatty-acid-binding protein 1 (FAP1) from Arabidopsis thaliana (Mouse-ear cress).